We begin with the raw amino-acid sequence, 643 residues long: Type VI secretion system spike protein VgrG1a (643 aa).

It belongs to the VgrG protein family. Forms homotrimers. Part of the type VI secretion system (T6SS). Interacts with EagT6 and Tse6; these interactions are required for Tse6 loading onto VgrG1. Interacts with Hcp1.

It is found in the secreted. Its function is as follows. Part of the H1 type VI secretion system (H1-T6SS) specialized secretion system, which delivers several virulence factors in both prokaryotic and eukaryotic cells during infection. Forms the spike at the tip of the elongating tube formed by haemolysin co-regulated protein 1/Hcp1. Allows the delivery of the Tse6 toxin to target cells where it exerts its toxicity. The polypeptide is Type VI secretion system spike protein VgrG1a (Pseudomonas aeruginosa (strain ATCC 15692 / DSM 22644 / CIP 104116 / JCM 14847 / LMG 12228 / 1C / PRS 101 / PAO1)).